We begin with the raw amino-acid sequence, 1368 residues long: MQYSFTEKKRIRKSFAKRPIVHQVPFLLATQLESFSTFLQADTSSTQRKPEGLQAAFTSVFPIVSHNGFARLEFVSYMLSPPAFNIKECQQRGLTYCSALRAKVRLVLLDKESPSKPVVKEVKEQEVYMGEIPLMTPTGSFVINGTERVIVSQLHRSPGVFFEHDKGKTHSSGKLLFSARIIPYRGSWLDFEFDPKDVLYFRVDRRRKMPVTILLKAIGLTPEQILANFFVFDNFTLMPEGAQMEFVPERLRGEVARFDITDRDGNVIVQKDKRINAKHIRDLDNAKTKFISVPEDYLLGRVLAKNVVDGDTGEVIANANDEITETVLEKLRESKIKDIQTLYTNDLDQGPYISSTLRIDETADKMAARIAIYRMMRPGEPPTEEAVEALFNRLFYSEDAYDLSKVGRMKFNRRVGRDEIVGPMTLQDDDILATIKILVELRNGKGEVDDIDHLGNRRVRCVGELAENQFRAGLVRVERAVKERLGQAESENLMPHDLINSKPISSAIREFFGSSQLSQFMDQTNPLSEITHKRRVSALGPGGLTRERAGFEVRDVHPTHYGRVCPIETPEGPNIGLINSLALYAHLNEYGFLETPYRKVVDSKVTDQIDYLSAIEEGRYVIAQANAAVAEDGSLTDELVSSREAGETLMVTPDRIQYMDVAPSQIVSVAASLIPFLEHDDANRALMGSNMQRQAVPCLRPEKAVVGTGIERTVAVDSGTTVQAFRGGVVDYVDAGRMVIRVNDDEAVAGDVGVDIYNLIKYTRSNQNTNINQRPIVKVGDIVSRGDVLADGASTDLGELALGQNMLVAFMPWNGYNFEDSILISEKVVADDRYTSIHIEELNVVARDTKLGPEEITRDISNLAEVQLGRLDESGIVYIGAEVEAGDVLVGKVTPKGETQLTPEEKLLRAIFGEKASDVKDTSLRVPSGMSGTVIDVQVFTREGIQRDKRAQQIIDDELKRYRLDLNDQLRIVEGDAFQRLARMLTGKVANGGPKKLAKGTKIEQAYLEDLDHYHWFDIRLADEEAAAQLEAIKDSIEQKRHQFDLAFEEKRKKLTQGDELPPGVLKMVKVYLAVKRRLQPGDKMAGRHGNKGVVSKIVPIEDMPYMADGRPADVVLNPLGVPSRMNVGQVLEVHLGWAAKGLGWRIGEMLQRQAKIAELREFLTKIYNESGRAEELDSFTDDEIVELAKNLREGVPFATPVFDGATEEEMSRALDLAFPDDIAKNLGMTPSKNQVRLYDGRTGEMFERTVTVGYMHYLKLHHLVDDKMHARSTGPYSLVTQQPLGGKAQFGGQRFGEMEVWALEAYGASYVLQEMLTVKSDDVTGRTKVYENLVKGDHVIDAGMPESFNVLVKEIRSLGIDIDLDRN.

This sequence belongs to the RNA polymerase beta chain family. As to quaternary structure, the RNAP catalytic core consists of 2 alpha, 1 beta, 1 beta' and 1 omega subunit. When a sigma factor is associated with the core the holoenzyme is formed, which can initiate transcription.

The catalysed reaction is RNA(n) + a ribonucleoside 5'-triphosphate = RNA(n+1) + diphosphate. DNA-dependent RNA polymerase catalyzes the transcription of DNA into RNA using the four ribonucleoside triphosphates as substrates. The chain is DNA-directed RNA polymerase subunit beta from Paraburkholderia xenovorans (strain LB400).